We begin with the raw amino-acid sequence, 85 residues long: Putative RING finger protein 095L (85 aa).

The RING-type; degenerate zinc-finger motif lies at 39-73; it reads CPIWYNYQVNTVFLPCAHVACYLCSKIIKNCHLCR.

The polypeptide is Putative RING finger protein 095L (Invertebrate iridescent virus 6 (IIV-6)).